Reading from the N-terminus, the 436-residue chain is GTPase Der (436 aa).

EngA-type G domains follow at residues 3–168 (PLVA…EEKS) and 177–352 (IRLA…EQRS). Residues 9 to 16 (GRPNVGKS), 56 to 60 (DTGGY), 120 to 123 (NKVE), 183 to 190 (GRPNVGKS), 230 to 234 (DTAGL), and 295 to 298 (NKWD) contribute to the GTP site. The KH-like domain maps to 353-436 (QQITTSDLNR…VPFSLRFMQK (84 aa)).

It belongs to the TRAFAC class TrmE-Era-EngA-EngB-Septin-like GTPase superfamily. EngA (Der) GTPase family. In terms of assembly, associates with the 50S ribosomal subunit.

In terms of biological role, GTPase that plays an essential role in the late steps of ribosome biogenesis. The sequence is that of GTPase Der from Prosthecochloris aestuarii (strain DSM 271 / SK 413).